Here is a 484-residue protein sequence, read N- to C-terminus: Siroheme synthase 1 (484 aa).

Residues 1 to 205 form a precorrin-2 dehydrogenase /sirohydrochlorin ferrochelatase region; that stretch reads MHHYPIFLKL…GREAEGEAEL (205 aa). NAD(+)-binding positions include 22–23 and 43–44; these read EA and PV. At S130 the chain carries Phosphoserine. The tract at residues 220–484 is uroporphyrinogen-III C-methyltransferase; sequence GEVFLVGAGP…DPCWTGGMRD (265 aa). Residue P229 participates in S-adenosyl-L-methionine binding. D252 functions as the Proton acceptor in the catalytic mechanism. K274 acts as the Proton donor in catalysis. S-adenosyl-L-methionine contacts are provided by residues 305-307, L310, 335-336, M387, and A416; these read GGD and SA.

The protein in the N-terminal section; belongs to the precorrin-2 dehydrogenase / sirohydrochlorin ferrochelatase family. This sequence in the C-terminal section; belongs to the precorrin methyltransferase family.

It carries out the reaction uroporphyrinogen III + 2 S-adenosyl-L-methionine = precorrin-2 + 2 S-adenosyl-L-homocysteine + H(+). The catalysed reaction is precorrin-2 + NAD(+) = sirohydrochlorin + NADH + 2 H(+). The enzyme catalyses siroheme + 2 H(+) = sirohydrochlorin + Fe(2+). It functions in the pathway cofactor biosynthesis; adenosylcobalamin biosynthesis; precorrin-2 from uroporphyrinogen III: step 1/1. The protein operates within cofactor biosynthesis; adenosylcobalamin biosynthesis; sirohydrochlorin from precorrin-2: step 1/1. It participates in porphyrin-containing compound metabolism; siroheme biosynthesis; precorrin-2 from uroporphyrinogen III: step 1/1. Its pathway is porphyrin-containing compound metabolism; siroheme biosynthesis; siroheme from sirohydrochlorin: step 1/1. It functions in the pathway porphyrin-containing compound metabolism; siroheme biosynthesis; sirohydrochlorin from precorrin-2: step 1/1. Functionally, multifunctional enzyme that catalyzes the SAM-dependent methylations of uroporphyrinogen III at position C-2 and C-7 to form precorrin-2 via precorrin-1. Then it catalyzes the NAD-dependent ring dehydrogenation of precorrin-2 to yield sirohydrochlorin. Finally, it catalyzes the ferrochelation of sirohydrochlorin to yield siroheme. The chain is Siroheme synthase 1 from Halorhodospira halophila (strain DSM 244 / SL1) (Ectothiorhodospira halophila (strain DSM 244 / SL1)).